The following is a 184-amino-acid chain: Peptide deformylase (184 aa).

The Fe cation site is built by Cys-99 and His-141. Glu-142 is a catalytic residue. Fe cation is bound at residue His-145.

It belongs to the polypeptide deformylase family. Fe(2+) serves as cofactor.

It carries out the reaction N-terminal N-formyl-L-methionyl-[peptide] + H2O = N-terminal L-methionyl-[peptide] + formate. Functionally, removes the formyl group from the N-terminal Met of newly synthesized proteins. Requires at least a dipeptide for an efficient rate of reaction. N-terminal L-methionine is a prerequisite for activity but the enzyme has broad specificity at other positions. The sequence is that of Peptide deformylase from Chlamydia abortus (strain DSM 27085 / S26/3) (Chlamydophila abortus).